The sequence spans 1013 residues: Poly [ADP-ribose] polymerase 1 (1013 aa).

PARP-type zinc fingers lie at residues 10 to 92 (YKAE…ESGG) and 113 to 203 (FAVE…PAVK). 8 residues coordinate Zn(2+): Cys22, Cys25, His54, Cys57, Cys125, Cys128, His159, and Cys162. The interval 202 to 228 (VKSEGKRKADEVDGGVSKKQKKEDEKL) is disordered. The Nuclear localization signal motif lies at 207 to 209 (KRK). In terms of domain architecture, PADR1 zinc-binding spans 219–353 (KKQKKEDEKL…FKRQDRVFPK (135 aa)). Residues 284–326 (GSLKPCETCKGQLVFKSDAYYCTGDISAWTKCVFKTQTPDRKD) form a zinc ribbon region. Zn(2+) is bound by residues Cys289, Cys292, Cys305, and Cys315. The interval 353 to 385 (KDAPPAAATPSSGSTTSAATSVSSASKNLTEAP) is disordered. The span at 356-378 (PPAAATPSSGSTTSAATSVSSAS) shows a compositional bias: low complexity. Positions 365–523 (GSTTSAATSV…EGGSKSKKMK (159 aa)) are automodification domain. One can recognise a BRCT domain in the interval 385–461 (PADKPLTGMK…RVVADDFLTD (77 aa)). PolyADP-ribosyl glutamic acid is present on residues Glu413, Glu435, Glu444, Glu445, Glu464, Glu471, Glu484, and Glu488. The span at 494–507 (AATKSTGAHSSKST) shows a compositional bias: low complexity. The interval 494–522 (AATKSTGAHSSKSTGKVKEEEGGSKSKKM) is disordered. PolyADP-ribosyl glutamic acid occurs at positions 512 and 513. Residues 541 to 637 (CAHVLEQNGK…SNFTKYPNKF (97 aa)) enclose the WGR domain. The PARP alpha-helical domain occupies 661–778 (KSQLEKPVQD…DIEVAYSLLR (118 aa)). The PARP catalytic domain occupies 787-1013 (DPIDINYEKL…IRFNYQTSLW (227 aa)). NAD(+)-binding positions include 861–863 (HGS), Gly870, Arg877, and Ser903. Glu987 functions as the For poly [ADP-ribose] polymerase activity in the catalytic mechanism.

This sequence belongs to the ARTD/PARP family. As to quaternary structure, homodimer; PARP-type zinc-fingers from separate parp1 molecules form a dimer module that specifically recognizes DNA strand breaks. In terms of processing, poly-ADP-ribosylated on serine, glutamate and aspartate residues by autocatalysis. Auto-ADP-ribosylation on serine takes place following interaction with HPF1. Auto poly-ADP-ribosylation on serine residues promotes its dissociation from chromatin.

Its subcellular location is the chromosome. The protein resides in the nucleus. It localises to the nucleolus. The protein localises to the cytoplasm. It is found in the cytosol. The enzyme catalyses NAD(+) + (ADP-D-ribosyl)n-acceptor = nicotinamide + (ADP-D-ribosyl)n+1-acceptor + H(+).. It carries out the reaction L-seryl-[protein] + NAD(+) = O-(ADP-D-ribosyl)-L-seryl-[protein] + nicotinamide + H(+). It catalyses the reaction L-aspartyl-[protein] + NAD(+) = 4-O-(ADP-D-ribosyl)-L-aspartyl-[protein] + nicotinamide. The catalysed reaction is L-glutamyl-[protein] + NAD(+) = 5-O-(ADP-D-ribosyl)-L-glutamyl-[protein] + nicotinamide. The enzyme catalyses L-tyrosyl-[protein] + NAD(+) = O-(ADP-D-ribosyl)-L-tyrosyl-[protein] + nicotinamide + H(+). It carries out the reaction L-histidyl-[protein] + NAD(+) = N(tele)-(ADP-D-ribosyl)-L-histidyl-[protein] + nicotinamide + H(+). With respect to regulation, ADP-ribosyltransferase activity is regulated via an allosteric activation mechanism. In absence of activation signal, parp1 is autoinhibited by the PARP alpha-helical domain (also named HD region), which prevents effective NAD(+)-binding. Activity is highly stimulated by signals, such as DNA strand breaks. Binding to damaged DNA unfolds the PARP alpha-helical domain, relieving autoinhibition. Poly-ADP-ribosyltransferase activity is tightly regulated and parp1 is removed from damaged chromatin following initial poly-ADP-ribosylation of chromatin to avoid prolonged residence (trapping) that has cytotoxic consequences. A number of factors or post-translational modifications (auto-poly-ADP-ribosylation) promote parp1 removal from chromatin. Its function is as follows. Poly-ADP-ribosyltransferase that mediates poly-ADP-ribosylation of proteins and plays a key role in DNA repair. Mediates glutamate, aspartate, serine, histidine or tyrosine ADP-ribosylation of proteins: the ADP-D-ribosyl group of NAD(+) is transferred to the acceptor carboxyl group of target residues and further ADP-ribosyl groups are transferred to the 2'-position of the terminal adenosine moiety, building up a polymer with an average chain length of 20-30 units. Serine ADP-ribosylation of proteins constitutes the primary form of ADP-ribosylation of proteins in response to DNA damage. Specificity for the different amino acids is conferred by interacting factors, such as hpf1 and nmnat1. Following interaction with hpf1, catalyzes serine ADP-ribosylation of target proteins; hpf1 confers serine specificity by completing the parp1 active site. Also catalyzes tyrosine ADP-ribosylation of target proteins following interaction with hpf1. Following interaction with nmnat1, catalyzes glutamate and aspartate ADP-ribosylation of target proteins; nmnat1 confers glutamate and aspartate specificity. Parp1 initiates the repair of DNA breaks: recognizes and binds DNA breaks within chromatin and recruits hpf1, licensing serine ADP-ribosylation of target proteins, such as histones (H2BS6ADPr and H3S10ADPr), thereby promoting decompaction of chromatin and the recruitment of repair factors leading to the reparation of DNA strand breaks. In addition to base excision repair (BER) pathway, also involved in double-strand breaks (DSBs) repair. Mediates the poly-ADP-ribosylation of a number of proteins. In addition to proteins, also able to ADP-ribosylate DNA: catalyzes ADP-ribosylation of DNA strand break termini containing terminal phosphates and a 2'-OH group in single- and double-stranded DNA, respectively. Parp1-mediated DNA repair in neurons plays a role in sleep: senses DNA damage in neurons and promotes sleep, facilitating efficient DNA repair. In addition to DNA repair, also involved in other processes, such as transcription regulation, programmed cell death, membrane repair, adipogenesis and innate immunity. Acts as a repressor of transcription: binds to nucleosomes and modulates chromatin structure in a manner similar to histone H1, thereby altering RNA polymerase II. Acts both as a positive and negative regulator of transcription elongation, depending on the context. Poly-ADP-ribose chains generated by parp1 also play a role in poly-ADP-ribose-dependent cell death, a process named parthanatos. Also acts as a negative regulator of the cGAS-STING pathway by mediating poly-ADP-ribosylation and inactivation of cgas. Acts as a negative regulator of adipogenesis by catalyzing poly ADP-ribosylation of histone H2B on 'Glu-35' (H2BE35ADPr). The sequence is that of Poly [ADP-ribose] polymerase 1 from Danio rerio (Zebrafish).